A 538-amino-acid polypeptide reads, in one-letter code: Cytochrome P450 monooxygenase astC (538 aa).

Residues 18–38 form a helical membrane-spanning segment; the sequence is ALMLPALVGCALLIYRAFFAI. Position 481 (Cys-481) interacts with heme.

The protein belongs to the cytochrome P450 family. Heme serves as cofactor.

It localises to the membrane. The protein operates within secondary metabolite biosynthesis; terpenoid biosynthesis. Its function is as follows. Cytochrome P450 monooxygenase; part of the gene cluster that mediates the biosynthesis of the sesquiterpenoid aspterric acid (AA), an inhibitor of dihydroxy-acid dehydratase (DHAD) effective as an herbicide. AstC catalyzes the third and last step within the pathway and converts the alpha-epoxy carboxylate intermediate produced by the cytochrome P450 monooxygenase astC from (-)daucane into the tricyclic aspterric acid. The sequence is that of Cytochrome P450 monooxygenase astC from Aspergillus terreus (strain NIH 2624 / FGSC A1156).